A 208-amino-acid polypeptide reads, in one-letter code: uncharacterized protein (208 aa).

It to E.coli YagK.

This is an uncharacterized protein from Escherichia coli (strain K12).